The primary structure comprises 77 residues: Protein NS4 (77 aa).

The protein resides in the host cytoplasm. Its subcellular location is the host nucleus. It is found in the host nucleolus. May function as a nucleic acid binding protein that modulates transcription of genes participating in the IFN response. This chain is Protein NS4 (Segment-9), found in Antilocapra americana (Pronghorn).